A 1067-amino-acid chain; its full sequence is Dorsal-ventral patterning protein tolloid (1067 aa).

Residues 1–36 (MKGMRLMPMKMKAKLVVLSVGALWMMMFFLVDYAEG) form the signal peptide. A propeptide spanning residues 37–136 (RRLSQLPESE…NGQPIQRRRR (100 aa)) is cleaved from the precursor. The Peptidase M12A domain occupies 136 to 338 (RAVTVRKERT…VQANLLYKCA (203 aa)). A glycan (N-linked (GlcNAc...) asparagine) is linked at asparagine 176. 5 cysteine pairs are disulfide-bonded: cysteine 179–cysteine 337, cysteine 201–cysteine 223, cysteine 203–cysteine 204, cysteine 340–cysteine 390, and cysteine 417–cysteine 439. Histidine 231 contributes to the Zn(2+) binding site. Residue glutamate 232 is part of the active site. Zn(2+)-binding residues include histidine 235 and histidine 241. Short sequence motifs (cell attachment site) lie at residues 245–247 (RGD) and 325–327 (RGD). CUB domains lie at 340-477 (CGRT…FEVV) and 478-591 (CGGD…LMLD). Asparagine 441 carries an N-linked (GlcNAc...) asparagine glycan. Disulfide bonds link cysteine 478–cysteine 505, cysteine 532–cysteine 554, cysteine 595–cysteine 606, cysteine 602–cysteine 615, cysteine 617–cysteine 630, and cysteine 634–cysteine 662. N-linked (GlcNAc...) asparagine glycosylation is present at asparagine 543. The region spanning 591–631 (DVDECKFTDHGCQHLCINTLGSYQCGCRAGYELQANGKTCE) is the EGF-like 1; calcium-binding domain. A CUB 3 domain is found at 634 to 753 (CGGVVDATKS…SGFVAKFVID (120 aa)). N-linked (GlcNAc...) asparagine glycosylation is found at asparagine 644 and asparagine 677. Cystine bridges form between cysteine 693/cysteine 716, cysteine 757/cysteine 768, cysteine 764/cysteine 777, cysteine 779/cysteine 792, cysteine 797/cysteine 823, cysteine 850/cysteine 872, cysteine 910/cysteine 940, and cysteine 967/cysteine 989. An EGF-like 2; calcium-binding domain is found at 753 to 793 (DVDECSMNNGGCQHRCRNTFGSYQCSCRNGYTLAENGHNCT). A glycan (N-linked (GlcNAc...) asparagine) is linked at asparagine 791. CUB domains lie at 797–909 (CKFE…FVSE) and 910–1026 (CGGY…FMAV). N-linked (GlcNAc...) asparagine glycosylation is found at asparagine 864 and asparagine 918.

It depends on Zn(2+) as a cofactor.

Its function is as follows. Metalloprotease which cleaves TGF-beta family ligands daw, Actbeta and myo in vitro. Cleavage of daw enhances its signaling activity. Cleaves dorsal-ventral patterning protein sog. Processes sog more efficiently than metalloprotease tld which also cleaves sog. Required for normal dorsal development. TLD may interact physically with DPP-C protein. In Drosophila melanogaster (Fruit fly), this protein is Dorsal-ventral patterning protein tolloid (tld).